The sequence spans 269 residues: Indole-3-glycerol phosphate synthase (269 aa).

The protein belongs to the TrpC family.

The enzyme catalyses 1-(2-carboxyphenylamino)-1-deoxy-D-ribulose 5-phosphate + H(+) = (1S,2R)-1-C-(indol-3-yl)glycerol 3-phosphate + CO2 + H2O. Its pathway is amino-acid biosynthesis; L-tryptophan biosynthesis; L-tryptophan from chorismate: step 4/5. This is Indole-3-glycerol phosphate synthase from Roseiflexus castenholzii (strain DSM 13941 / HLO8).